The primary structure comprises 126 residues: Pancreatic polypeptide prohormone (126 aa).

The signal sequence occupies residues 1-26; that stretch reads MTATRCCLWLLLLGTCMALLLPEAWG. Y62 carries the post-translational modification Tyrosine amide. Residues 77–126 form a disordered region; sequence RQSHAAAPGGSHRHPPAGLPAAKGGTGVSGSPPKPWDCLPCRAHSLPSQS.

Belongs to the NPY family. In terms of processing, no icosapeptide-like peptide is cleaved from the C-terminal.

The protein localises to the secreted. Functionally, hormone secreted by pancreatic cells that acts as a regulator of pancreatic and gastrointestinal functions probably by signaling through the G protein-coupled receptor NPY4R2. The protein is Pancreatic polypeptide prohormone (PPY) of Cavia porcellus (Guinea pig).